Here is a 183-residue protein sequence, read N- to C-terminus: uncharacterized protein (183 aa).

The protein belongs to the Bcl-2 family.

This is an uncharacterized protein from Equine herpesvirus 2 (strain 86/87) (EHV-2).